We begin with the raw amino-acid sequence, 298 residues long: Beta-1,3-galactosyltransferase 5 (298 aa).

The Cytoplasmic segment spans residues 1–7; that stretch reads MAFPKMR. A helical; Signal-anchor for type II membrane protein membrane pass occupies residues 8-28; that stretch reads LMYICLLVLGALCLYFSMYSL. Residues 29–298 lie on the Lumenal side of the membrane; it reads NPFKEQSFVY…PRTLLDYWQA (270 aa). N-linked (GlcNAc...) asparagine glycosylation is found at asparagine 130, asparagine 174, and asparagine 231.

The protein belongs to the glycosyltransferase 31 family.

The protein localises to the golgi apparatus membrane. The enzyme catalyses a globoside Gb4Cer (d18:1(4E)) + UDP-alpha-D-galactose = a globoside GalGb4Cer (d18:1(4E)) + UDP + H(+). The protein operates within protein modification; protein glycosylation. In terms of biological role, catalyzes the transfer of Gal to GlcNAc-based acceptors with a preference for the core3 O-linked glycan GlcNAc(beta1,3)GalNAc structure. Can use glycolipid LC3Cer as an efficient acceptor. This is Beta-1,3-galactosyltransferase 5 (B3GALT5) from Gorilla gorilla gorilla (Western lowland gorilla).